We begin with the raw amino-acid sequence, 328 residues long: Alcohol-sensitive RING finger protein 1 (328 aa).

Residues 18-61 form an RING-type 1; atypical zinc finger; sequence CSICWESMPSGVGRLMPCGHEYHLACIRKWFHLHSGNRSCPVCR. Residues 129–177 form an RING-type 2; atypical zinc finger; that stretch reads CGICGEMNGDIDTCCNRCHHMYHHSCLGQLLVEVNAEREQGWSHCIFCY.

The protein resides in the cytoplasm. It is found in the nucleus. Required for tolerance to alcohol. The protein is Alcohol-sensitive RING finger protein 1 (ASR1) of Eremothecium gossypii (strain ATCC 10895 / CBS 109.51 / FGSC 9923 / NRRL Y-1056) (Yeast).